The chain runs to 616 residues: Dihydroxy-acid dehydratase (616 aa).

Asp81 contacts Mg(2+). Cys122 provides a ligand contact to [2Fe-2S] cluster. Residues Asp123 and Lys124 each coordinate Mg(2+). The residue at position 124 (Lys124) is an N6-carboxylysine. Cys195 is a [2Fe-2S] cluster binding site. Position 491 (Glu491) interacts with Mg(2+). Catalysis depends on Ser517, which acts as the Proton acceptor.

The protein belongs to the IlvD/Edd family. As to quaternary structure, homodimer. [2Fe-2S] cluster serves as cofactor. The cofactor is Mg(2+).

The catalysed reaction is (2R)-2,3-dihydroxy-3-methylbutanoate = 3-methyl-2-oxobutanoate + H2O. It catalyses the reaction (2R,3R)-2,3-dihydroxy-3-methylpentanoate = (S)-3-methyl-2-oxopentanoate + H2O. The protein operates within amino-acid biosynthesis; L-isoleucine biosynthesis; L-isoleucine from 2-oxobutanoate: step 3/4. It participates in amino-acid biosynthesis; L-valine biosynthesis; L-valine from pyruvate: step 3/4. In terms of biological role, functions in the biosynthesis of branched-chain amino acids. Catalyzes the dehydration of (2R,3R)-2,3-dihydroxy-3-methylpentanoate (2,3-dihydroxy-3-methylvalerate) into 2-oxo-3-methylpentanoate (2-oxo-3-methylvalerate) and of (2R)-2,3-dihydroxy-3-methylbutanoate (2,3-dihydroxyisovalerate) into 2-oxo-3-methylbutanoate (2-oxoisovalerate), the penultimate precursor to L-isoleucine and L-valine, respectively. This chain is Dihydroxy-acid dehydratase, found in Salmonella dublin (strain CT_02021853).